Here is a 54-residue protein sequence, read N- to C-terminus: Hydrophobic protein RCI2B (54 aa).

The next 2 helical transmembrane spans lie at 2-22 (STATFVEIILAIILPPLGVFL) and 32-52 (ICLILTLFGYLPGILYALYII).

Belongs to the UPF0057 (PMP3) family.

It is found in the membrane. The polypeptide is Hydrophobic protein RCI2B (RCI2B) (Arabidopsis thaliana (Mouse-ear cress)).